The primary structure comprises 89 residues: Defensin-like protein 147 (89 aa).

A signal peptide spans 1 to 24 (MKKIFQLSFTVFIIFISLVLGVVG). 4 disulfides stabilise this stretch: Cys34-Cys82, Cys46-Cys66, Cys51-Cys79, and Cys55-Cys81.

The protein belongs to the DEFL family. In terms of tissue distribution, expressed in flower buds, but not in stems, roots or rosette leaves.

The protein localises to the secreted. The polypeptide is Defensin-like protein 147 (LCR1) (Arabidopsis thaliana (Mouse-ear cress)).